The following is a 127-amino-acid chain: Glycine cleavage system H protein (127 aa).

In terms of domain architecture, Lipoyl-binding spans 22 to 104 (KVRIGITDFA…YEKAWMIVIE (83 aa)). At Lys63 the chain carries N6-lipoyllysine.

The protein belongs to the GcvH family. The glycine cleavage system is composed of four proteins: P, T, L and H. It depends on (R)-lipoate as a cofactor.

In terms of biological role, the glycine cleavage system catalyzes the degradation of glycine. The H protein shuttles the methylamine group of glycine from the P protein to the T protein. Is also involved in protein lipoylation via its role as an octanoyl/lipoyl carrier protein intermediate. The protein is Glycine cleavage system H protein of Geobacillus thermodenitrificans (strain NG80-2).